The chain runs to 434 residues: Serine/threonine-protein kinase Sgk1-B (434 aa).

The tract at residues 68–94 is disordered; that stretch reads ESELLNENSSPPPSHSQQINLGPSSNP. Residues 101-358 enclose the Protein kinase domain; it reads FQFLKIIGKG…FMEIKNHIFF (258 aa). ATP is bound by residues 107-115 and Lys130; that span reads IGKGSFGKV. Asp225 (proton acceptor) is an active-site residue. In terms of domain architecture, AGC-kinase C-terminal spans 359–434; it reads SPIDWDDLIN…SYAPPMDSYL (76 aa).

This sequence belongs to the protein kinase superfamily. AGC Ser/Thr protein kinase family.

It localises to the cytoplasm. Its subcellular location is the nucleus. It is found in the endoplasmic reticulum. The enzyme catalyses L-seryl-[protein] + ATP = O-phospho-L-seryl-[protein] + ADP + H(+). It carries out the reaction L-threonyl-[protein] + ATP = O-phospho-L-threonyl-[protein] + ADP + H(+). Functionally, protein kinase that may play an important role in cellular stress response. Plays an important role in activating certain potassium, sodium, and chloride channels, suggesting an involvement in the regulation of processes such as cell survival, neuronal excitability and renal sodium excretion. This Xenopus laevis (African clawed frog) protein is Serine/threonine-protein kinase Sgk1-B (sgk1-b).